The primary structure comprises 219 residues: 7-cyano-7-deazaguanine synthase (219 aa).

10–20 provides a ligand contact to ATP; it reads FSGGQDSTTCL. The Zn(2+) site is built by cysteine 188, cysteine 197, cysteine 200, and cysteine 203.

The protein belongs to the QueC family. In terms of assembly, homodimer. The cofactor is Zn(2+).

The catalysed reaction is 7-carboxy-7-deazaguanine + NH4(+) + ATP = 7-cyano-7-deazaguanine + ADP + phosphate + H2O + H(+). It participates in purine metabolism; 7-cyano-7-deazaguanine biosynthesis. Its function is as follows. Catalyzes the ATP-dependent conversion of 7-carboxy-7-deazaguanine (CDG) to 7-cyano-7-deazaguanine (preQ(0)). The chain is 7-cyano-7-deazaguanine synthase from Clostridium botulinum (strain ATCC 19397 / Type A).